A 195-amino-acid chain; its full sequence is MPDINESMLNQFRPVIRRFIDPIADRIALPADYITLTGFLVACAASAGYASGSLITGAALLAASGFIDVLDGAVARRRFRPTAFGGFLDSTLDRLSDGIIIIGITAGGFTGLLTGLLALHSGLMVSYVRARAESLGIECAVGIAERAERIIIILAGSLAGYLIHPWFMDAAIIVLAALGYFTMIQRMIYVWQRLK.

2 helical membrane passes run Ile-27 to Ala-47 and Leu-54 to Val-74. Mg(2+) contacts are provided by Asp-68, Asp-71, Asp-89, and Asp-93. Asp-93 acts as the Proton acceptor in catalysis. 2 consecutive transmembrane segments (helical) span residues Ile-99–Leu-119 and Leu-158–Leu-178.

This sequence belongs to the CDP-alcohol phosphatidyltransferase class-I family. Requires Mn(2+) as cofactor. Mg(2+) serves as cofactor.

The protein resides in the cell membrane. It catalyses the reaction CDP-2,3-bis-O-(phytanyl)-sn-glycerol + 1D-myo-inositol 3-phosphate = saturated 1-archaetidyl-1D-myo-inositol 3-phosphate + CMP + H(+). The protein operates within lipid metabolism; phospholipid metabolism. Functionally, catalyzes the formation of archaetidylinositol phosphate (AIP) from CDP-archaeol (CDP-ArOH or CDP-2,3-bis-(O-phytanyl)-sn-glycerol) and 1L-myo-inositol 1-phosphate (IP or 1D-myo-inositol 3-phosphate). AIP is a precursor of archaetidyl-myo-inositol (AI), an ether-type inositol phospholipid ubiquitously distributed in archaea membranes and essential for glycolipid biosynthesis in archaea. The sequence is that of Archaetidylinositol phosphate synthase from Methanothermobacter thermautotrophicus (strain ATCC 29096 / DSM 1053 / JCM 10044 / NBRC 100330 / Delta H) (Methanobacterium thermoautotrophicum).